Here is a 355-residue protein sequence, read N- to C-terminus: Protein RecA (355 aa).

67-74 is an ATP binding site; sequence GPESSGKT. Residues 331–355 form a disordered region; that stretch reads NQDDKPDFTPAAHEVDEGSEAKENF.

This sequence belongs to the RecA family.

Its subcellular location is the cytoplasm. In terms of biological role, can catalyze the hydrolysis of ATP in the presence of single-stranded DNA, the ATP-dependent uptake of single-stranded DNA by duplex DNA, and the ATP-dependent hybridization of homologous single-stranded DNAs. It interacts with LexA causing its activation and leading to its autocatalytic cleavage. The chain is Protein RecA from Erwinia tasmaniensis (strain DSM 17950 / CFBP 7177 / CIP 109463 / NCPPB 4357 / Et1/99).